The chain runs to 170 residues: Bacilliredoxin SRU_1493 (170 aa).

Residues 140-170 (CGDEEPPADAPSRPDPSSSGEGLPSTFQSIT) form a disordered region.

It belongs to the bacilliredoxin family.

The chain is Bacilliredoxin SRU_1493 from Salinibacter ruber (strain DSM 13855 / M31).